The primary structure comprises 419 residues: Cytosine permease (419 aa).

The Cytoplasmic segment spans residues 1 to 19 (MSQDNNFSQGPVPQSARKG). A helical membrane pass occupies residues 20 to 39 (VLALTFVMLGLTFFSASMWT). Over 40–51 (GGTLGTGLSYHD) the chain is Periplasmic. Residues 52–71 (FFLAVLIGNLLLGIYTSFLG) traverse the membrane as a helical segment. The Cytoplasmic segment spans residues 72–100 (YIGAKTGLTTHLLARFSFGVKGSWLPSLL). The chain crosses the membrane as a helical span at residues 101–120 (LGGTQVGWFGVGVAMFAIPV). Topologically, residues 121-127 (GKATGLD) are periplasmic. The helical transmembrane segment at 128 to 147 (INLLIAVSGLLMTVTVFFGI) threads the bilayer. Over 148-152 (SALTV) the chain is Cytoplasmic. The helical transmembrane segment at 153–172 (LSLIAVPAIACLGGYSVWLA) threads the bilayer. The Periplasmic portion of the chain corresponds to 173-192 (VNGMGGLDALKAVVPAQPLD). Residues 193-212 (FNVALALVVGSFISAGTLTA) traverse the membrane as a helical segment. Residues 213-221 (DFVRFGRNA) lie on the Cytoplasmic side of the membrane. Residues 222–242 (KLAVLVAMVAFFLGNSLMFIF) form a helical membrane-spanning segment. The Periplasmic portion of the chain corresponds to 243–257 (GAAGAAALGMADISD). A helical transmembrane segment spans residues 258–277 (VMIAQGLLLPAIVVLGLNIW). The Cytoplasmic portion of the chain corresponds to 278 to 300 (TTNDNALYASGLGFANITGMSSK). A helical transmembrane segment spans residues 301–320 (TLSVINGIIGTVCALWLYNN). Residue F321 is a topological domain, periplasmic. Residues 322 to 341 (VGWLTFLSAAIPPVGGVIIA) traverse the membrane as a helical segment. Over 342-358 (DYLMNRRRYEHFATTRM) the chain is Cytoplasmic. Residues 359-378 (MSVNWVAILAVALGIAAGHW) traverse the membrane as a helical segment. Residues 379-380 (LP) lie on the Periplasmic side of the membrane. A helical transmembrane segment spans residues 381-400 (GIVPVNAVLGGALSYLILNP). Residues 401–419 (ILNRKTTAAMTHVEANSVE) lie on the Cytoplasmic side of the membrane.

This sequence belongs to the purine-cytosine permease (2.A.39) family.

It is found in the cell inner membrane. Functionally, required for cytosine transport into the cell. The polypeptide is Cytosine permease (codB) (Escherichia coli O157:H7).